Here is a 1305-residue protein sequence, read N- to C-terminus: MSQKGIKSLTISIASPEQILNWSKGEITKPETINYKSLKPEPNGLFDESIFGPSKDYECYCGKYRKVKHKGKICERCHVEITESIVRRERMGHIELAAPVAHIWFTKELPSPSKISLLLDITYKEVDQVVYFVNYIVLDEGNNVYDGKSIFNKKEVLDLTSPKNSIRSRNKLRRTLRNIQERIEDELNHEREALIQDFDYRLAVTYDQMLKDSNIPFSVKDVMAFIEKHTGVRFGIGAEAIRELLEKLNLEEEHEKIKQAIQNSPNAYDQKTKRLLRRLECVRWIKDSGSKPEWMVMTRIPVTPSETRPIISLDGGRFTTSDTNNFYRKIIIRNERLKQMQATDAPEILLDNEKRLLQEAVDSLFDNNSRKKPVVGKDKRPLKSLSNHLKGKQGLFRQNLLGKRVDYSGRSVIVVGPELKMYEVGIPALMILKLFRPYIISELIRKRDELGNEIQPICANIKLAEQKILAQDNEIWPVVEKVIKQRPVILNRAPTLHRLGIQAFEPKMVDGKAIRLHPLVTTAFNADFDGDQMAVHIPLSKEAVAEARSILLASWHILGPKDGKPIITPTQDMILGIYYLTKEKFPQVIEEMMAKDPTQARVEFINNFHIFSTQDEAIRAYKLKTIRINDVIGITTKAFNNKTFSKEGILVTTVGKIIFNQAFPVNFPYINDVKNLYGENQFEIIGMHESILDYLKAYNLKEPLTKKTLSTVIDYLYKVSEIEVVPQTMDKIKALGFKYSMISATSISAFDIPSYDQKYEYFKETDELVSKLREFYLDGKLTDDERYTKVVQAWSQTKDKVTHDIEKLINSNEYKDNPIVIMAKSGARGNTSNFTQLAGMRGLMSKSYNYDQKNNNGVIKDTIEIPIKHSFIEGLSVSEYFNSSFGARKGMTDTAMKTAKSGYMTRKLVDSTQAVVIKDHDCGTKEGIIVREIRNTKDNTSIESLKDRIVGRYSINTIYDTKNKLIIESDKLITSEIANIIQNSGIREVEVRSPLHCASLYGVCQKCFGLDLSTNKLIETGTAIGVIAAQSIGEPGTQLTMRTFHTGGVAGDTNITQGFERIKQLFDCIQPQENEKAVISQVKGTVERIEKDSNTNGYNVVIKYNKDNYVNYPTRSNAVLRVKTGDEIIAGQKITEGSIDVNDLLKYAGIENVRHYIIKEVQKVYRMQGIEISDKYIEVIISQLTNKITITNPGDSGLFVGETISINEFTEVAQNMLVNKKKPPSAINQVFGLDHAPSKSGSFLSAASFQDTKKILTDAAARSQKDMLIGLKENVILGNLIPAGTGLKDVEEVIAYGEEMYKKQY.

Zn(2+)-binding residues include Cys-59, Cys-61, Cys-74, and Cys-77. Mg(2+) contacts are provided by Asp-527, Asp-529, and Asp-531. Positions 922, 997, 1004, and 1007 each coordinate Zn(2+).

The protein belongs to the RNA polymerase beta' chain family. As to quaternary structure, the RNAP catalytic core consists of 2 alpha, 1 beta, 1 beta' and 1 omega subunit. When a sigma factor is associated with the core the holoenzyme is formed, which can initiate transcription. Requires Mg(2+) as cofactor. The cofactor is Zn(2+).

It catalyses the reaction RNA(n) + a ribonucleoside 5'-triphosphate = RNA(n+1) + diphosphate. In terms of biological role, DNA-dependent RNA polymerase catalyzes the transcription of DNA into RNA using the four ribonucleoside triphosphates as substrates. The polypeptide is DNA-directed RNA polymerase subunit beta' (Ureaplasma parvum serovar 3 (strain ATCC 700970)).